The following is a 294-amino-acid chain: Putative isocitrate dehydrogenase [NAD] subunit-like 4 (294 aa).

This sequence belongs to the isocitrate and isopropylmalate dehydrogenases family.

Functionally, performs an essential role in the oxidative function of the citric acid cycle. The chain is Putative isocitrate dehydrogenase [NAD] subunit-like 4 (IDH4) from Arabidopsis thaliana (Mouse-ear cress).